Consider the following 118-residue polypeptide: T cell receptor gamma variable 2 (118 aa).

The N-terminal stretch at 1–17 (MQWALAVLLAFLSPASQ) is a signal peptide. Residues 18 to 118 (KSSNLEGRTK…GVYYCATWDG (101 aa)) enclose the Ig-like domain. Residues Cys-41 and Cys-113 are joined by a disulfide bond.

In terms of assembly, gamma-delta TR is a heterodimer composed of a gamma and delta chain; disulfide-linked. The gamma-delta TR is associated with the transmembrane signaling CD3 coreceptor proteins following the stoichiometry: a single gamma-delta TR heterodimer associates with one CD3D-CD3E heterodimer, one CD3G-CD3E heterodimer and one CD247 homodimer forming a stable octameric structure. Upon activation, gamma-delta TR complex associates with FCER1G to initiate intracellular signaling.

It is found in the cell membrane. V region of the variable domain of T cell receptor (TR) gamma chain that participates in the antigen recognition. Gamma-delta TRs recognize a variety of self and foreign non-peptide antigens frequently expressed at the epithelial boundaries between the host and external environment, including endogenous lipids presented by MH-like protein CD1D and phosphoantigens presented by butyrophilin-like molecule BTN3A1. Upon antigen recognition induces rapid, innate-like immune responses involved in pathogen clearance and tissue repair. Binding of gamma-delta TR complex to antigen triggers phosphorylation of immunoreceptor tyrosine-based activation motifs (ITAMs) in the CD3 chains by the LCK and FYN kinases, allowing the recruitment, phosphorylation, and activation of ZAP70 that facilitates phosphorylation of the scaffolding proteins LCP2 and LAT. This lead to the formation of a supramolecular signalosome that recruits the phospholipase PLCG1, resulting in calcium mobilization and ERK activation, ultimately leading to T cell expansion and differentiation into effector cells. Gamma-delta TRs are produced through somatic rearrangement of a limited repertoire of variable (V), diversity (D), and joining (J) genes. The potential diversity of gamma-delta TRs is conferred by the unique ability to rearrange (D) genes in tandem and to utilize all three reading frames. The combinatorial diversity is considerably increased by the sequence exonuclease trimming and random nucleotide (N) region additions which occur during the V-(D)-J rearrangements. This is T cell receptor gamma variable 2 from Homo sapiens (Human).